The chain runs to 154 residues: Snaclec dabocetin subunit alpha (154 aa).

The first 23 residues, 1–23, serve as a signal peptide directing secretion; sequence MGRFISVSFGLLVVFLSLSGTGA. 3 disulfides stabilise this stretch: Cys25–Cys36, Cys53–Cys148, and Cys123–Cys140. The region spanning 32–149 is the C-type lectin domain; it reads HEGHCYKVFK…CGDKNPFICK (118 aa).

Belongs to the snaclec family. Heterodimer of subunits alpha and beta; disulfide-linked. In terms of tissue distribution, expressed by the venom gland.

It localises to the secreted. Functionally, inhibits ristocetin-induced platelet aggregation via binding to platelet glycoprotein Ibalpha (GP1BA). The chain is Snaclec dabocetin subunit alpha from Daboia siamensis (Eastern Russel's viper).